The chain runs to 152 residues: UPF0266 membrane protein YobD (152 aa).

The next 3 helical transmembrane spans lie at 6–26, 45–65, and 67–87; these read LVLI…QFIM, VDSV…VTSH, and AQMT…IFWI.

This sequence belongs to the UPF0266 family.

It is found in the cell inner membrane. The chain is UPF0266 membrane protein YobD from Salmonella choleraesuis (strain SC-B67).